The primary structure comprises 213 residues: Major fimbrial subunit (213 aa).

A signal peptide spans 1–20; that stretch reads MKKTLLGSLILLAFAGNVQA. The cysteines at positions 41 and 81 are disulfide-linked.

Belongs to the fimbrial protein family.

Its subcellular location is the fimbrium. Its function is as follows. Mediates adherence to oropharyngeal epithelial cells. Helps the airway colonization process. In Haemophilus influenzae, this protein is Major fimbrial subunit (hifA).